The following is a 608-amino-acid chain: Serine/threonine-protein kinase SSN3 (608 aa).

The segment at 1–72 is disordered; it reads MSYSSASFRK…PGTVGTRTSI (72 aa). The segment covering 17 to 47 has biased composition (low complexity); sequence SQPSQTTTTTTSANQPQSQSQQQPLQQSQQQ. Residues 49-59 show a composition bias toward basic residues; sequence LHMKPNPHIPH. Residues 104–492 enclose the Protein kinase domain; it reads YQIMGYIAAG…ADQALLHPYF (389 aa). ATP contacts are provided by residues 110–118 and Lys-182; that span reads IAAGTYGKV. The Proton acceptor role is filled by Asp-307. The segment at 523–608 is disordered; sequence MTTAANNNNN…LPGGIRKKRG (86 aa). Residues 528 to 583 are compositionally biased toward low complexity; sequence NNNNNNNNNNNNNNNNNNNNNNNNNNNSGHQLSQQQNVQIQQVHQMQQQIHSQQLQ.

This sequence belongs to the protein kinase superfamily. CMGC Ser/Thr protein kinase family. CDC2/CDKX subfamily. Component of the SRB8-11 complex, a regulatory module of the Mediator complex. Requires Mg(2+) as cofactor.

The protein resides in the nucleus. The enzyme catalyses L-seryl-[protein] + ATP = O-phospho-L-seryl-[protein] + ADP + H(+). It carries out the reaction L-threonyl-[protein] + ATP = O-phospho-L-threonyl-[protein] + ADP + H(+). It catalyses the reaction [DNA-directed RNA polymerase] + ATP = phospho-[DNA-directed RNA polymerase] + ADP + H(+). Its function is as follows. Component of the SRB8-11 complex. The SRB8-11 complex is a regulatory module of the Mediator complex which is itself involved in regulation of basal and activated RNA polymerase II-dependent transcription. The SRB8-11 complex may be involved in the transcriptional repression of a subset of genes regulated by Mediator. It may inhibit the association of the Mediator complex with RNA polymerase II to form the holoenzyme complex. The SRB8-11 complex phosphorylates the C-terminal domain (CTD) of the largest subunit of RNA polymerase II. The protein is Serine/threonine-protein kinase SSN3 (SSN3) of Candida albicans (strain SC5314 / ATCC MYA-2876) (Yeast).